A 202-amino-acid chain; its full sequence is uncharacterized protein (202 aa).

A disordered region spans residues aspartate 164–glutamate 202. The segment covering threonine 165–glutamate 202 has biased composition (acidic residues).

This is an uncharacterized protein from Acanthamoeba polyphaga mimivirus (APMV).